The sequence spans 468 residues: ATP synthase subunit beta (468 aa).

155 to 162 is an ATP binding site; the sequence is GGAGVGKT.

The protein belongs to the ATPase alpha/beta chains family. F-type ATPases have 2 components, CF(1) - the catalytic core - and CF(0) - the membrane proton channel. CF(1) has five subunits: alpha(3), beta(3), gamma(1), delta(1), epsilon(1). CF(0) has three main subunits: a(1), b(2) and c(9-12). The alpha and beta chains form an alternating ring which encloses part of the gamma chain. CF(1) is attached to CF(0) by a central stalk formed by the gamma and epsilon chains, while a peripheral stalk is formed by the delta and b chains.

It is found in the cell membrane. It catalyses the reaction ATP + H2O + 4 H(+)(in) = ADP + phosphate + 5 H(+)(out). Functionally, produces ATP from ADP in the presence of a proton gradient across the membrane. The catalytic sites are hosted primarily by the beta subunits. This is ATP synthase subunit beta from Streptococcus equi subsp. zooepidemicus (strain H70).